Here is a 187-residue protein sequence, read N- to C-terminus: WETCKEFLKLSQLEIPQDGTSALRESSPEESHALRKKYGGFMKRYGGFMKKMDELYPQEPEEEAPAEILAKRYGGFMKKDAEEEEDALASSSDLLKELLGPGETETAAAPRGRDDEDVSKSHGGFMRALKGSPQLAQEAKMLQKRYGGFMRRVGRPEWWMDYQKRYGGFLKRFADSLPSDEEGESYS.

4 propeptides span residues 52 to 70 (MDELYPQEPEEEAPAEILA), 80 to 143 (DAEE…KMLQ), 153 to 163 (VGRPEWWMDYQ), and 173 to 187 (FADSLPSDEEGESYS). A disordered region spans residues 81 to 132 (AEEEEDALASSSDLLKELLGPGETETAAAPRGRDDEDVSKSHGGFMRALKGS). Low complexity predominate over residues 88–99 (LASSSDLLKELL). Positions 111–120 (RGRDDEDVSK) are enriched in basic and acidic residues. Ser-187 is modified (phosphoserine).

Belongs to the opioid neuropeptide precursor family. Post-translationally, processed and degraded by ACE. The N-terminal domain contains 6 conserved cysteines thought to be involved in disulfide bonding and/or processing. In terms of processing, proenkephalin-A is cleaved by CTSL to generate Met-enkephalin.

The protein resides in the cytoplasmic vesicle. It localises to the secretory vesicle. The protein localises to the chromaffin granule lumen. It is found in the secreted. Neuropeptide that competes with and mimic the effects of opiate drugs. They play a role in a number of physiologic functions, including pain perception and responses to stress. In Felis catus (Cat), this protein is Proenkephalin-A (PENK).